The following is a 436-amino-acid chain: Ribulose bisphosphate carboxylase large chain (436 aa).

Lys4 is subject to N6,N6,N6-trimethyllysine. The substrate site is built by Asn113 and Thr163. Lys165 serves as the catalytic Proton acceptor. Position 167 (Lys167) interacts with substrate. Residues Lys191, Asp193, and Glu194 each coordinate Mg(2+). Lys191 bears the N6-carboxylysine mark. His284 functions as the Proton acceptor in the catalytic mechanism. Residues Arg285, His317, and Ser369 each contribute to the substrate site.

This sequence belongs to the RuBisCO large chain family. Type I subfamily. In terms of assembly, heterohexadecamer of 8 large chains and 8 small chains; disulfide-linked. The disulfide link is formed within the large subunit homodimers. Mg(2+) serves as cofactor. Post-translationally, the disulfide bond which can form in the large chain dimeric partners within the hexadecamer appears to be associated with oxidative stress and protein turnover.

The protein localises to the plastid. The protein resides in the chloroplast. It catalyses the reaction 2 (2R)-3-phosphoglycerate + 2 H(+) = D-ribulose 1,5-bisphosphate + CO2 + H2O. The enzyme catalyses D-ribulose 1,5-bisphosphate + O2 = 2-phosphoglycolate + (2R)-3-phosphoglycerate + 2 H(+). Its function is as follows. RuBisCO catalyzes two reactions: the carboxylation of D-ribulose 1,5-bisphosphate, the primary event in carbon dioxide fixation, as well as the oxidative fragmentation of the pentose substrate in the photorespiration process. Both reactions occur simultaneously and in competition at the same active site. The chain is Ribulose bisphosphate carboxylase large chain from Sanguinaria canadensis (Bloodroot).